The following is a 235-amino-acid chain: Large ribosomal subunit protein uL1 (235 aa).

Belongs to the universal ribosomal protein uL1 family. As to quaternary structure, part of the 50S ribosomal subunit.

Functionally, binds directly to 23S rRNA. The L1 stalk is quite mobile in the ribosome, and is involved in E site tRNA release. In terms of biological role, protein L1 is also a translational repressor protein, it controls the translation of the L11 operon by binding to its mRNA. The chain is Large ribosomal subunit protein uL1 from Desulfotalea psychrophila (strain LSv54 / DSM 12343).